A 762-amino-acid polypeptide reads, in one-letter code: 5-methyltetrahydropteroyltriglutamate--homocysteine methyltransferase (762 aa).

5-methyltetrahydropteroyltri-L-glutamate contacts are provided by residues 17 to 20 (REWK) and lysine 111. L-homocysteine contacts are provided by residues 435-437 (IGS) and glutamate 488. L-methionine contacts are provided by residues 435-437 (IGS) and glutamate 488. 5-methyltetrahydropteroyltri-L-glutamate-binding positions include 519–520 (RC) and tryptophan 565. Residue aspartate 603 coordinates L-homocysteine. Aspartate 603 lines the L-methionine pocket. Glutamate 609 serves as a coordination point for 5-methyltetrahydropteroyltri-L-glutamate. Residues histidine 645, cysteine 647, and glutamate 669 each contribute to the Zn(2+) site. Histidine 698 acts as the Proton donor in catalysis. Cysteine 730 contributes to the Zn(2+) binding site.

It belongs to the vitamin-B12 independent methionine synthase family. Requires Zn(2+) as cofactor.

It carries out the reaction 5-methyltetrahydropteroyltri-L-glutamate + L-homocysteine = tetrahydropteroyltri-L-glutamate + L-methionine. The protein operates within amino-acid biosynthesis; L-methionine biosynthesis via de novo pathway; L-methionine from L-homocysteine (MetE route): step 1/1. Functionally, catalyzes the transfer of a methyl group from 5-methyltetrahydrofolate to homocysteine resulting in methionine formation. The chain is 5-methyltetrahydropteroyltriglutamate--homocysteine methyltransferase from Bacillus thuringiensis (strain Al Hakam).